The sequence spans 1031 residues: Sister chromatid cohesion 1 protein 4 (1031 aa).

The segment at 461–481 (TPDKEDPGTCNDDAGNNNITG) is disordered. The Nuclear localization signal signature appears at 545–552 (TKRLRSAP). Disordered stretches follow at residues 661–703 (VEEN…EELK), 742–772 (EKLD…ADPN), and 803–835 (ELPH…VGST). Composition is skewed to basic and acidic residues over residues 742–762 (EKLD…HDGE) and 803–825 (ELPH…RDDQ).

The protein belongs to the rad21 family. As to quaternary structure, component of the cohesin complex. In terms of tissue distribution, expressed in tissues containing dividing cells such as seedlings, flower buds, flowers and inflorescence meristem tissue.

The protein resides in the nucleus. It is found in the chromosome. It localises to the centromere. In terms of biological role, involved in sister chromatid and centromere cohesion during mitosis. This chain is Sister chromatid cohesion 1 protein 4 (SYN4), found in Arabidopsis thaliana (Mouse-ear cress).